Reading from the N-terminus, the 54-residue chain is Large ribosomal subunit protein bL32c (54 aa).

Belongs to the bacterial ribosomal protein bL32 family.

The protein localises to the plastid. The protein resides in the chloroplast. This chain is Large ribosomal subunit protein bL32c, found in Panax ginseng (Korean ginseng).